Reading from the N-terminus, the 277-residue chain is MKQLYGVIGNPIGHSLSPVMHNDAFEHLNMDAHYHAFLVEEELLGEAVRGLKALGISGFNVTTPHKVAIMEYLDEIDPLARKIGAVNTVVHKDGRLIGYNTDGIGFVRALQSISNEPLQGKRILLLGSGGASRAIYFSLADVGVKEIDVANRTVDKAKELIAARTADVNSVALSLEKATEEQGNYDIIIQTTTIGMHPHVEHTPLQICSLKKGTIVSDIIYNPFETKILCEAKEQGAIIQNGIDMFVYQGALAFEMWTGRTPNIERMKQLVIEKLGG.

Residues 15–17 and Thr-62 contribute to the shikimate site; that span reads SLS. The Proton acceptor role is filled by Lys-66. The shikimate site is built by Asn-87 and Asp-102. Residues 127–131, 151–156, and Ile-219 contribute to the NADP(+) site; these read GSGGA and NRTVDK. Residue Tyr-221 coordinates shikimate. Gly-242 serves as a coordination point for NADP(+).

Belongs to the shikimate dehydrogenase family. In terms of assembly, homodimer.

It carries out the reaction shikimate + NADP(+) = 3-dehydroshikimate + NADPH + H(+). Its pathway is metabolic intermediate biosynthesis; chorismate biosynthesis; chorismate from D-erythrose 4-phosphate and phosphoenolpyruvate: step 4/7. Functionally, involved in the biosynthesis of the chorismate, which leads to the biosynthesis of aromatic amino acids. Catalyzes the reversible NADPH linked reduction of 3-dehydroshikimate (DHSA) to yield shikimate (SA). The chain is Shikimate dehydrogenase (NADP(+)) from Bacillus cereus (strain B4264).